A 130-amino-acid polypeptide reads, in one-letter code: Flagellar assembly factor FliW (130 aa).

Belongs to the FliW family. As to quaternary structure, interacts with translational regulator CsrA and flagellin(s).

The protein resides in the cytoplasm. In terms of biological role, acts as an anti-CsrA protein, binds CsrA and prevents it from repressing translation of its target genes, one of which is flagellin. Binds to flagellin and participates in the assembly of the flagellum. The polypeptide is Flagellar assembly factor FliW (Borreliella burgdorferi (strain ATCC 35210 / DSM 4680 / CIP 102532 / B31) (Borrelia burgdorferi)).